The sequence spans 176 residues: Small ribosomal subunit protein uS4 (176 aa).

One can recognise an S4 RNA-binding domain in the interval 104–166; it reads RRLQTIVYKK…PTSPFKQNPP (63 aa).

The protein belongs to the universal ribosomal protein uS4 family. Part of the 30S ribosomal subunit. Contacts protein S5. The interaction surface between S4 and S5 is involved in control of translational fidelity.

In terms of biological role, one of the primary rRNA binding proteins, it binds directly to 16S rRNA where it nucleates assembly of the body of the 30S subunit. Its function is as follows. With S5 and S12 plays an important role in translational accuracy. This is Small ribosomal subunit protein uS4 (rps4) from Sulfolobus acidocaldarius (strain ATCC 33909 / DSM 639 / JCM 8929 / NBRC 15157 / NCIMB 11770).